Reading from the N-terminus, the 657-residue chain is Zinc transporter ZIP4 (657 aa).

A signal peptide spans 1 to 22; sequence MMLPKSLTQGLLLAMLVGTAAM. The Extracellular segment spans residues 23-335; that stretch reads VQPYHLLSLL…QDQLSQAERY (313 aa). N-linked (GlcNAc...) asparagine glycosylation is found at Asn-193, Asn-220, and Asn-268. A helical membrane pass occupies residues 336–356; it reads LYGSLATLLICLCAVFGLLLL. At 357–374 the chain is on the cytoplasmic side; that stretch reads TCAKCSTATHYIMQTFLS. Residues 375-395 form a helical membrane-spanning segment; sequence LAVGALTGDALLHLIPKVLGL. At 396-417 the chain is on the extracellular side; that stretch reads HTHSGEVHSHEEESIGGQSTWR. The helical transmembrane segment at 418 to 438 threads the bilayer; it reads LLAVLGGFYIFFLFESFFNLL. Topologically, residues 439-508 are cytoplasmic; sequence LPRDQDHEKD…LRAELRMLPY (70 aa). The Essential for SLC39A4 endocytosis motif lies at 462-464; that stretch reads LQL. A disordered region spans residues 467-491; it reads SNLRQSKQPHESSRSDLVTEETPEL. A helical membrane pass occupies residues 509-528; it reads LITLGDAVHNFADGLAVGAA. Positions 517, 518, and 521 each coordinate Zn(2+). Residues 529 to 536 are Extracellular-facing; the sequence is FSSTWKTG. Residues 537 to 563 form a helical membrane-spanning segment; the sequence is LATSLAVFCHELPHELGDFAALLHAGL. 3 residues coordinate Zn(2+): His-546, Glu-547, and His-550. Residues 564 to 568 are Cytoplasmic-facing; the sequence is TVKRA. A helical membrane pass occupies residues 569 to 589; it reads LLLNLASALTAFAGLYVALAV. Residues 590-597 are Extracellular-facing; that stretch reads GVGEEGET. A helical membrane pass occupies residues 598 to 618; sequence WILAVATGLFLYVALCDMLPA. The Cytoplasmic segment spans residues 619–627; that stretch reads MMNVRDQRP. Residues 628-648 form a helical membrane-spanning segment; that stretch reads WLLFLLHNVGLLGGWTILLLL. Over 649 to 657 the chain is Extracellular; it reads SLYEDSITF.

Belongs to the ZIP transporter (TC 2.A.5) family. As to quaternary structure, homodimer; homodimerization is mediated by the transmembrane domain. In terms of processing, the extracellular N-terminal ectodomain is cleaved when cells are Zn(2+) deficient, N-terminally cleaved SLC39A4 is internalized at a faster rate. Under excess Zn(2+) conditions, SLC39A4 on the cell surface is rapidly endocytosed, ubiquitinated and degraded. Post-translationally, glycosylated. In terms of tissue distribution, expressed in duodenum, jejunum, and ileum.

The protein resides in the cell membrane. It localises to the recycling endosome membrane. It is found in the apical cell membrane. The enzyme catalyses Zn(2+)(in) = Zn(2+)(out). In terms of biological role, selective transporter that mediates the uptake of Zn(2+). Plays an essential role for dietary zinc uptake from small intestine. The Zn(2+) uniporter activity is regulated by zinc availability. Also exhibits polyspecific binding and transport of Cu(2+), Cd(2+) and possibly Ni(2+) but at higher concentrations. The chain is Zinc transporter ZIP4 (Slc39a4) from Rattus norvegicus (Rat).